The primary structure comprises 231 residues: Orotidine 5'-phosphate decarboxylase (231 aa).

Substrate-binding positions include Asp11, Lys32, 59 to 68 (DLKFHDIPNT), Thr118, Arg180, Gln189, Gly209, and Arg210. Lys61 (proton donor) is an active-site residue.

Belongs to the OMP decarboxylase family. Type 1 subfamily. In terms of assembly, homodimer.

The enzyme catalyses orotidine 5'-phosphate + H(+) = UMP + CO2. Its pathway is pyrimidine metabolism; UMP biosynthesis via de novo pathway; UMP from orotate: step 2/2. Functionally, catalyzes the decarboxylation of orotidine 5'-monophosphate (OMP) to uridine 5'-monophosphate (UMP). This is Orotidine 5'-phosphate decarboxylase from Synechocystis sp. (strain ATCC 27184 / PCC 6803 / Kazusa).